The primary structure comprises 346 residues: Archaeosine synthase subunit beta (346 aa).

The Radical SAM core domain maps to 36-276 (GVQTKTLTVI…LRQAKAAHPE (241 aa)). C51, C59, and C62 together coordinate [4Fe-4S] cluster.

It belongs to the radical SAM superfamily. RaSEA family. As to quaternary structure, forms a robust complex with the archaeosine synthase alpha subunit ArcS. This complex likely consists of an alpha(2)beta(2) heterotetrameric structure. The cofactor is [4Fe-4S] cluster.

The enzyme catalyses 7-N-[(5S)-5-amino-5-carboxypentyl]formamidino-7-deazaguanosine(15) in tRNA + S-adenosyl-L-methionine = archaeosine(15) in tRNA + L-1-piperideine-6-carboxylate + 5'-deoxyadenosine + L-methionine + 2 H(+). It participates in tRNA modification; archaeosine-tRNA biosynthesis. In terms of biological role, radical SAM enzyme involved in the synthesis of archaeosine, a modified nucleoside present in the dihydrouridine loop (D-loop) of archaeal tRNAs. Catalyzes the cleavage of the C(epsilon)-N bond of the lysine moiety of q0kN15-tRNA, leading to the formation of archaeosine at position 15 in tRNAs. This chain is Archaeosine synthase subunit beta, found in Methanosarcina acetivorans (strain ATCC 35395 / DSM 2834 / JCM 12185 / C2A).